The chain runs to 98 residues: Small ribosomal subunit protein bS20 (98 aa).

This sequence belongs to the bacterial ribosomal protein bS20 family.

Its function is as follows. Binds directly to 16S ribosomal RNA. This Synechococcus sp. (strain CC9902) protein is Small ribosomal subunit protein bS20.